We begin with the raw amino-acid sequence, 305 residues long: Coenzyme PQQ synthesis protein B (305 aa).

The protein belongs to the PqqB family.

Its pathway is cofactor biosynthesis; pyrroloquinoline quinone biosynthesis. Its function is as follows. May be involved in the transport of PQQ or its precursor to the periplasm. This chain is Coenzyme PQQ synthesis protein B, found in Cupriavidus taiwanensis (strain DSM 17343 / BCRC 17206 / CCUG 44338 / CIP 107171 / LMG 19424 / R1) (Ralstonia taiwanensis (strain LMG 19424)).